The following is a 111-amino-acid chain: UPF0060 membrane protein XAC3064 (111 aa).

4 helical membrane passes run 8-28 (LLLFAATALAELVGCYLPYLW), 32-52 (GGSVWLLLPTALSLAVFVWLL), 64-84 (AAYGGVYIASALLWLWWVDGV), and 91-111 (LLGAACCLLGMAVIMFSPRSA).

It belongs to the UPF0060 family.

It is found in the cell inner membrane. The polypeptide is UPF0060 membrane protein XAC3064 (Xanthomonas axonopodis pv. citri (strain 306)).